Reading from the N-terminus, the 465-residue chain is MEGKIISVNGPVVDIYFPNDVPHIYEALEVENPIKNEKLVLETRILFGENKVRAIALGSTEGISRGLTVKRTFHPISVPVSEEILGRVVNVFGEPIDGGEKIRGEVTPIIKNAAEFRRVQPSYSILETGIKAIDLLTPFPQGGKIGLFGGAGVGKTVLIMELIHNVAVAHGGISVFAGIGERSREGNELWLEMKESGVLSKAALVFGQMNEPPGVRMRVPLTALTIAEYFRDYLGKDVLLLMDNIFRYVQAGMEVSSMLGRIPSAVGYQPTLITELGEVEERILSTDTGSITAVQAVYVPADDLTDPAPATIFSHLDSTLVLSRSIAEMGIYPAVDPLASSSQILEPKFVGYEHAEVARKVVEILQHYESLKDIISILGVEELSEEDRIIVNRARKIQMFLSQPLFVASAYTNIPGVYVPREKTIEGFKAIIEGEVDDLPEDAFYMVGTLEDVKKKAEEHGALMY.

149 to 156 (GGAGVGKT) provides a ligand contact to ATP.

Belongs to the ATPase alpha/beta chains family. As to quaternary structure, F-type ATPases have 2 components, CF(1) - the catalytic core - and CF(0) - the membrane proton channel. CF(1) has five subunits: alpha(3), beta(3), gamma(1), delta(1), epsilon(1). CF(0) has three main subunits: a(1), b(2) and c(9-12). The alpha and beta chains form an alternating ring which encloses part of the gamma chain. CF(1) is attached to CF(0) by a central stalk formed by the gamma and epsilon chains, while a peripheral stalk is formed by the delta and b chains.

It is found in the cell inner membrane. It catalyses the reaction ATP + H2O + 4 H(+)(in) = ADP + phosphate + 5 H(+)(out). Its function is as follows. Produces ATP from ADP in the presence of a proton gradient across the membrane. The catalytic sites are hosted primarily by the beta subunits. The chain is ATP synthase subunit beta from Dictyoglomus thermophilum (strain ATCC 35947 / DSM 3960 / H-6-12).